Here is a 225-residue protein sequence, read N- to C-terminus: NAD(P)H-quinone oxidoreductase subunit K, chloroplastic (225 aa).

4 residues coordinate [4Fe-4S] cluster: cysteine 43, cysteine 44, cysteine 108, and cysteine 139.

The protein belongs to the complex I 20 kDa subunit family. In terms of assembly, NDH is composed of at least 16 different subunits, 5 of which are encoded in the nucleus. The cofactor is [4Fe-4S] cluster.

It is found in the plastid. Its subcellular location is the chloroplast thylakoid membrane. The catalysed reaction is a plastoquinone + NADH + (n+1) H(+)(in) = a plastoquinol + NAD(+) + n H(+)(out). It carries out the reaction a plastoquinone + NADPH + (n+1) H(+)(in) = a plastoquinol + NADP(+) + n H(+)(out). In terms of biological role, NDH shuttles electrons from NAD(P)H:plastoquinone, via FMN and iron-sulfur (Fe-S) centers, to quinones in the photosynthetic chain and possibly in a chloroplast respiratory chain. The immediate electron acceptor for the enzyme in this species is believed to be plastoquinone. Couples the redox reaction to proton translocation, and thus conserves the redox energy in a proton gradient. This Nasturtium officinale (Watercress) protein is NAD(P)H-quinone oxidoreductase subunit K, chloroplastic.